Consider the following 142-residue polypeptide: Hemoglobin subunit alpha (142 aa).

N-acetylserine is present on Ser1. The region spanning 1–142 (SLSDKDKNTV…LALALSERYR (142 aa)) is the Globin domain. An O2-binding site is contributed by His59. His88 is a binding site for heme b.

The protein belongs to the globin family. Heterotetramer of two alpha chains and two beta chains. Can form polymers. In terms of tissue distribution, red blood cells.

Functionally, involved in oxygen transport from gills to the various peripheral tissues. This chain is Hemoglobin subunit alpha (hba), found in Chelidonichthys kumu (Bluefin gurnard).